We begin with the raw amino-acid sequence, 244 residues long: SURF1-like protein (244 aa).

2 helical membrane-spanning segments follow: residues Ile7–Ser23 and Tyr201–Tyr219.

The protein belongs to the SURF1 family.

The protein localises to the cell membrane. In Rickettsia prowazekii (strain Madrid E), this protein is SURF1-like protein.